The primary structure comprises 189 residues: ATP synthase subunit b (189 aa).

Residues 35–54 (LLAQMFNFLVLLILLRAVAY) traverse the membrane as a helical segment.

It belongs to the ATPase B chain family. As to quaternary structure, F-type ATPases have 2 components, F(1) - the catalytic core - and F(0) - the membrane proton channel. F(1) has five subunits: alpha(3), beta(3), gamma(1), delta(1), epsilon(1). F(0) has three main subunits: a(1), b(2) and c(10-14). The alpha and beta chains form an alternating ring which encloses part of the gamma chain. F(1) is attached to F(0) by a central stalk formed by the gamma and epsilon chains, while a peripheral stalk is formed by the delta and b chains.

The protein resides in the cell membrane. In terms of biological role, f(1)F(0) ATP synthase produces ATP from ADP in the presence of a proton or sodium gradient. F-type ATPases consist of two structural domains, F(1) containing the extramembraneous catalytic core and F(0) containing the membrane proton channel, linked together by a central stalk and a peripheral stalk. During catalysis, ATP synthesis in the catalytic domain of F(1) is coupled via a rotary mechanism of the central stalk subunits to proton translocation. Its function is as follows. Component of the F(0) channel, it forms part of the peripheral stalk, linking F(1) to F(0). The polypeptide is ATP synthase subunit b (Desulforamulus reducens (strain ATCC BAA-1160 / DSM 100696 / MI-1) (Desulfotomaculum reducens)).